The following is a 599-amino-acid chain: Elongation factor 4 (599 aa).

Residues 5 to 187 (SHIRNFSIVA…SIVQNLPAPK (183 aa)) enclose the tr-type G domain. GTP is bound by residues 17 to 22 (DHGKST) and 134 to 137 (NKID).

This sequence belongs to the TRAFAC class translation factor GTPase superfamily. Classic translation factor GTPase family. LepA subfamily.

The protein localises to the cell inner membrane. It carries out the reaction GTP + H2O = GDP + phosphate + H(+). Required for accurate and efficient protein synthesis under certain stress conditions. May act as a fidelity factor of the translation reaction, by catalyzing a one-codon backward translocation of tRNAs on improperly translocated ribosomes. Back-translocation proceeds from a post-translocation (POST) complex to a pre-translocation (PRE) complex, thus giving elongation factor G a second chance to translocate the tRNAs correctly. Binds to ribosomes in a GTP-dependent manner. The polypeptide is Elongation factor 4 (Roseobacter denitrificans (strain ATCC 33942 / OCh 114) (Erythrobacter sp. (strain OCh 114))).